Reading from the N-terminus, the 232-residue chain is Chalcone--flavanone isomerase (232 aa).

Residues Thr50 and Ser192 each coordinate substrate.

The protein belongs to the chalcone isomerase family.

It catalyses the reaction a chalcone = a flavanone.. It functions in the pathway secondary metabolite biosynthesis; flavonoid biosynthesis. Its function is as follows. Catalyzes the intramolecular cyclization of bicyclic chalcones into tricyclic (S)-flavanones. Responsible for the isomerization of 4,2',4',6'-tetrahydroxychalcone (also termed chalcone) into naringenin. In Saussurea medusa (Saw-wort), this protein is Chalcone--flavanone isomerase (CHI).